A 309-amino-acid chain; its full sequence is MANSLYQKHIISIPELSREELELIVETAGQLKKEPRPELIKNKVVASCFFEPSTRTRLSFETAIQRIGGDVIGFDNGGNTSLAKKGETLSDSVQVISSYVDAFVMRHPQEGAARLASEFSNGVPVINAGDGANQHPTQTLLDLYTIAETQSRLDNLNVAFVGDLKYGRTVHSLTQALAKFNNIRFFFVAPEALAMPDYLCEELDEAGIQYSLHTDMESVIPELDILYMTRVQKERFDESEYAHIKSAYILTAALLEGARENLKVLHPLPRVDEITTDVDVTPHAYYFQQAENGVYARQALLALVLNETL.

Carbamoyl phosphate-binding residues include arginine 55 and threonine 56. An L-aspartate-binding site is contributed by lysine 85. The carbamoyl phosphate site is built by arginine 106, histidine 135, and glutamine 138. L-aspartate-binding residues include arginine 168 and arginine 230. Carbamoyl phosphate-binding residues include leucine 268 and proline 269.

It belongs to the aspartate/ornithine carbamoyltransferase superfamily. ATCase family. In terms of assembly, heterododecamer (2C3:3R2) of six catalytic PyrB chains organized as two trimers (C3), and six regulatory PyrI chains organized as three dimers (R2).

The catalysed reaction is carbamoyl phosphate + L-aspartate = N-carbamoyl-L-aspartate + phosphate + H(+). It functions in the pathway pyrimidine metabolism; UMP biosynthesis via de novo pathway; (S)-dihydroorotate from bicarbonate: step 2/3. Catalyzes the condensation of carbamoyl phosphate and aspartate to form carbamoyl aspartate and inorganic phosphate, the committed step in the de novo pyrimidine nucleotide biosynthesis pathway. The sequence is that of Aspartate carbamoyltransferase catalytic subunit from Vibrio campbellii (strain ATCC BAA-1116).